Consider the following 600-residue polypeptide: Aspartate--tRNA(Asp/Asn) ligase (600 aa).

Residue E176 participates in L-aspartate binding. Residues 200–203 (QQFK) are aspartate. L-aspartate contacts are provided by R222 and H452. 222 to 224 (RDE) provides a ligand contact to ATP. An ATP-binding site is contributed by E490. R497 is an L-aspartate binding site. ATP is bound at residue 542–545 (GIDR).

The protein belongs to the class-II aminoacyl-tRNA synthetase family. Type 1 subfamily. As to quaternary structure, homodimer.

It is found in the cytoplasm. It carries out the reaction tRNA(Asx) + L-aspartate + ATP = L-aspartyl-tRNA(Asx) + AMP + diphosphate. Aspartyl-tRNA synthetase with relaxed tRNA specificity since it is able to aspartylate not only its cognate tRNA(Asp) but also tRNA(Asn). Reaction proceeds in two steps: L-aspartate is first activated by ATP to form Asp-AMP and then transferred to the acceptor end of tRNA(Asp/Asn). The sequence is that of Aspartate--tRNA(Asp/Asn) ligase from Rickettsia felis (strain ATCC VR-1525 / URRWXCal2) (Rickettsia azadi).